The following is a 562-amino-acid chain: uncharacterized protein (562 aa).

5 helical membrane passes run 4–26 (VRWIISTAPEIFLLLAVAIGTML), 33–55 (GFAIGTTACILIVSVLIGQLGTF), 59–78 (ALLRIVLFSLFVFTIGYKSG), 90–112 (LAQVAMALVLGGTGLVIVLAFAF), and 159–181 (IAAGYAVTYVLGYILTLLYVPFA). 2 consecutive RCK C-terminal domains span residues 207-287 (PKTE…IIGT) and 295-375 (LKAI…QVGQ). Helical transmembrane passes span 385 to 402 (IAFLAAGIAAGLLAGLVS), 406 to 428 (GGIALTLGGGGGALIAGLLCGWL), 449 to 471 (LGLGGFIAAIGLANGHAAWVAIQ), 476 to 498 (LLVGMGLVVTLVPLVVATLFAYH), 505 to 524 (VITCGALAGAMTVDAAVTGA), and 539 to 561 (VPYAVGNVVLTVLGPIIVACTFV).

Belongs to the AAE transporter (TC 2.A.81) family.

The protein resides in the cell membrane. This is an uncharacterized protein from Bradyrhizobium diazoefficiens (strain JCM 10833 / BCRC 13528 / IAM 13628 / NBRC 14792 / USDA 110).